Reading from the N-terminus, the 141-residue chain is Small ribosomal subunit protein uS12 (141 aa).

It belongs to the universal ribosomal protein uS12 family. Part of the 30S ribosomal subunit.

Its function is as follows. With S4 and S5 plays an important role in translational accuracy. Located at the interface of the 30S and 50S subunits. The chain is Small ribosomal subunit protein uS12 from Methanobrevibacter smithii (strain ATCC 35061 / DSM 861 / OCM 144 / PS).